The following is a 1831-amino-acid chain: Transmembrane protein 131 homolog (1831 aa).

An N-terminal signal peptide occupies residues 1 to 29 (MVPSIHKTSNRYRTIYFFLISLLITSTFA). Over 30-1169 (DQQAWPLPEE…QALPRPPFEN (1140 aa)) the chain is Lumenal. The interval 118 to 294 (EMDPPMMDFG…QSKQIATLVL (177 aa)) is papD-L domain. The chain crosses the membrane as a helical span at residues 1170–1190 (IMYYSCVTALIFCLVCVLACA). Residues 1191-1831 (YLEGDRAIAV…TDNENDEKNN (641 aa)) are Cytoplasmic-facing. A compositionally biased stretch (low complexity) spans 1223-1234 (STTTPVPTVPST). 4 disordered regions span residues 1223–1252 (STTT…RPST), 1325–1516 (GQQK…PTDD), 1663–1759 (QMKR…VSNP), and 1800–1831 (WSSS…EKNN). The segment covering 1338 to 1349 (PEFDEVEEEELA) has biased composition (acidic residues). Composition is skewed to low complexity over residues 1394–1407 (PIIV…PPVQ) and 1435–1448 (QVPP…TPKT). Residues 1455–1467 (EPEKPIKPSEQKK) show a composition bias toward basic and acidic residues. Residues 1480–1497 (TPSKARTPSKTPSQSNRA) are compositionally biased toward polar residues. Positions 1500–1514 (PASSPAPIAPTSAPT) are enriched in low complexity. Composition is skewed to polar residues over residues 1669–1687 (SPSQ…SPQK), 1702–1733 (NQSS…NSIQ), and 1742–1758 (WGDN…TVSN). Positions 1808-1820 (PPTQQPSTSQMPQ) are enriched in low complexity. The span at 1822-1831 (TDNENDEKNN) shows a compositional bias: acidic residues.

The protein belongs to the TMEM131 family. In terms of assembly, may interact (via PapD-L domain) with collagen proteins (via C-terminus); the interaction is direct and is involved in assembly and secretion of collagen. In terms of tissue distribution, predominantly expressed in the intestine and hypodermis.

Its subcellular location is the membrane. The protein localises to the endoplasmic reticulum membrane. Its function is as follows. Collagen binding transmembrane protein involved in collagen secretion, probably by recruiting the ER-to-Golgi transport complex TRAPPIII. Required for normal development. This Caenorhabditis elegans protein is Transmembrane protein 131 homolog.